Consider the following 223-residue polypeptide: DNA mismatch repair protein MutH (223 aa).

The protein belongs to the MutH family.

The protein localises to the cytoplasm. Its function is as follows. Sequence-specific endonuclease that cleaves unmethylated GATC sequences. It is involved in DNA mismatch repair. In Haemophilus influenzae (strain PittGG), this protein is DNA mismatch repair protein MutH.